The chain runs to 262 residues: Acyl-coenzyme A diphosphatase FITM2 (262 aa).

Residues 1–23 (MEHLERCAWFLRGTLVRATVRRH) are Cytoplasmic-facing. The helical transmembrane segment at 24 to 44 (LPWALVAAMLAGSVVKELSPL) threads the bilayer. The Lumenal segment spans residues 45–57 (PESYLSNKRNVLN). The chain crosses the membrane as a helical span at residues 58–78 (VYFVKLAWAWTVCLLLPFIAL). At 79-93 (TNYHLTGKTSLVLRR) the chain is on the cytoplasmic side. The chain crosses the membrane as a helical span at residues 94-114 (LSTLLVGTAIWYICTALFSNI). At 115–145 (EHYTGSCYQSPALEGIRQEHRSKQQCHREGG) the chain is on the lumenal side. The helical transmembrane segment at 146–166 (FWHGFDISGHSFLLTFCALMI) threads the bilayer. His-155 is a catalytic residue. The Cytoplasmic segment spans residues 167–190 (VEEMAVLHEVKTDRGHHLHAAITT). A helical transmembrane segment spans residues 191–211 (LVVALGFLTFIWVWMFLCTAV). Over 212–218 (YFHDLTQ) the chain is Lumenal. The active site involves His-214. The helical transmembrane segment at 219-239 (KVFGTMFGLLGWYGTYGYWYL) threads the bilayer. Residues 240–262 (KSFSPGLPPQSCSLTLKRDTYKK) lie on the Cytoplasmic side of the membrane.

Belongs to the FIT family. In terms of tissue distribution, widely expressed, with highest levels in white and brown adipose tissues (at protein level). In the heart, mRNA expression levels do not correlate well with protein levels, suggesting post-transcriptional regulation in this organ.

Its subcellular location is the endoplasmic reticulum membrane. It carries out the reaction an acyl-CoA + H2O = an acyl-4'-phosphopantetheine + adenosine 3',5'-bisphosphate + 2 H(+). The enzyme catalyses (9Z)-octadecenoyl-CoA + H2O = S-(9Z-octadecenoyl)-4'-phosphopantetheine + adenosine 3',5'-bisphosphate + 2 H(+). It catalyses the reaction (5Z,8Z,11Z,14Z)-eicosatetraenoyl-CoA + H2O = S-(5Z,8Z,11Z,14Z-eicosatetraenoyl)-4'-phosphopantetheine + adenosine 3',5'-bisphosphate + 2 H(+). The catalysed reaction is hexadecanoyl-CoA + H2O = S-hexadecanoyl-4'-phosphopantetheine + adenosine 3',5'-bisphosphate + 2 H(+). Functionally, fatty acyl-coenzyme A (CoA) diphosphatase that hydrolyzes fatty acyl-CoA to yield acyl-4'-phosphopantetheine and adenosine 3',5'-bisphosphate. Preferentially hydrolyzes unsaturated long-chain acyl-CoA substrates such as oleoyl-CoA/(9Z)-octadecenoyl-CoA and arachidonoyl-CoA/(5Z,8Z,11Z,14Z)-eicosatetraenoyl-CoA in the endoplasmic reticulum (ER) lumen. This catalytic activity is required for maintaining ER structure and for lipid droplets (LDs) biogenesis, which are lipid storage organelles involved in maintaining lipid and energy homeostasis. Directly binds to diacylglycerol (DAGs) and triacylglycerol, which is also important for LD biogenesis. May support directional budding of nacent LDs from the ER into the cytosol by reducing DAG levels at sites of LD formation. Plays a role in the regulation of cell morphology and cytoskeletal organization. The protein is Acyl-coenzyme A diphosphatase FITM2 of Mus musculus (Mouse).